The sequence spans 350 residues: Transmembrane protein 185B (350 aa).

7 helical membrane-spanning segments follow: residues 16–36 (LIYA…DGVI), 41–61 (WAVF…ASVG), 81–101 (FKAM…EVLV), 111–131 (FWLL…AACV), 168–188 (WLVV…VVLY), 211–231 (VTMA…EVLL), and 240–260 (MFSY…LMAT).

This sequence belongs to the TMEM185 family.

The protein localises to the membrane. This Bos taurus (Bovine) protein is Transmembrane protein 185B (TMEM185B).